The sequence spans 386 residues: Pepsin A (386 aa).

Positions 1 to 15 (MKWLLLLSLVALSEC) are cleaved as a signal peptide. The propeptide at 16-60 (YIYKVPLVKKKSLRKNLMEQGLLQDYLKTHSINPASKYLKEAASM) is activation peptide. Residues 74-383 (YFGTIGIGTP…DRGNNQVGLA (310 aa)) enclose the Peptidase A1 domain. Aspartate 92 is a catalytic residue. 2 cysteine pairs are disulfide-bonded: cysteine 105–cysteine 110 and cysteine 266–cysteine 270. Aspartate 275 is an active-site residue. A disulfide bridge links cysteine 309 with cysteine 342.

This sequence belongs to the peptidase A1 family.

It localises to the secreted. It catalyses the reaction Preferential cleavage: hydrophobic, preferably aromatic, residues in P1 and P1' positions. Cleaves 1-Phe-|-Val-2, 4-Gln-|-His-5, 13-Glu-|-Ala-14, 14-Ala-|-Leu-15, 15-Leu-|-Tyr-16, 16-Tyr-|-Leu-17, 23-Gly-|-Phe-24, 24-Phe-|-Phe-25 and 25-Phe-|-Tyr-26 bonds in the B chain of insulin.. Shows particularly broad specificity; although bonds involving phenylalanine and leucine are preferred, many others are also cleaved to some extent. The polypeptide is Pepsin A (PGA) (Rhinolophus ferrumequinum (Greater horseshoe bat)).